Consider the following 681-residue polypeptide: PWWP domain-containing DNA repair factor 3B (681 aa).

Positions 102–121 (NLSQESMSEEQPTATASENV) are enriched in polar residues. Disordered stretches follow at residues 102-144 (NLSQ…TQED), 166-200 (HTTG…DDKK), and 285-304 (QNQS…AGCS). S128 is subject to Phosphoserine. Positions 285–302 (QNQSSVESDVGAETSTAG) are enriched in polar residues. Positions 377–438 (TGMIVWFKYQ…KKYDCKEKQA (62 aa)) constitute a PWWP domain.

Belongs to the PWWP3A family.

This chain is PWWP domain-containing DNA repair factor 3B (Pwwp3b), found in Mus musculus (Mouse).